We begin with the raw amino-acid sequence, 92 residues long: uncharacterized protein (92 aa).

2 consecutive transmembrane segments (helical) span residues 34 to 54 and 65 to 85; these read GLGI…FMFG and LLYI…ASTV.

The protein resides in the cell membrane. This is an uncharacterized protein from Bacillus anthracis.